The primary structure comprises 407 residues: uncharacterized protein (407 aa).

Disordered stretches follow at residues 1 to 64 (MSRK…EPFD), 110 to 276 (GFGP…YPQF), and 314 to 341 (QSRP…HNNP). Residues 7-32 (KQSNPKRNYKNDNYFQENSYTMTNGF) show a composition bias toward polar residues. The span at 33–44 (TKDKDGKPVEFK) shows a compositional bias: basic and acidic residues. The segment covering 122-137 (DSDSEYSDECLTDECS) has biased composition (acidic residues). Polar residues-rich tracts occupy residues 138 to 147 (DNYNKQSTDS) and 184 to 201 (NFDN…NSQP). The segment covering 209–231 (SKSSSKSSKSNKSNKSSKSNKSS) has biased composition (low complexity). A compositionally biased stretch (basic residues) spans 232 to 246 (KSSKSKSNKHSKHKN). Over residues 247 to 258 (KSDSSSDSDEKT) the composition is skewed to basic and acidic residues. Composition is skewed to basic residues over residues 259 to 270 (HKHKDRRHRRGR) and 316 to 341 (RPRK…HNNP).

This is an uncharacterized protein from Acanthamoeba polyphaga mimivirus (APMV).